A 992-amino-acid polypeptide reads, in one-letter code: GYF domain-containing protein mpd2 (992 aa).

Disordered regions lie at residues 24 to 105 (ANNS…SANP), 172 to 245 (GTAS…NVAS), and 289 to 316 (FSQSPLRRGPSRFPTNSNVPVGNSMSIR). 2 stretches are compositionally biased toward polar residues: residues 25–58 (NNSSSSTTGAFPQLTSFTKPTATNGVDSPTSSHI) and 75–104 (KSGNMWDSLNAPSELTSKNPTVSSTTSSAN). Ser-175 is modified (phosphoserine). Residues 193–205 (SPSSFSQSRSAVS) are compositionally biased toward low complexity. Composition is skewed to polar residues over residues 214 to 237 (TLQQPQRAGSDTFPDLNTSSSNQP) and 301 to 315 (FPTNSNVPVGNSMSI). A Phosphothreonine modification is found at Thr-318. Position 320 is a phosphoserine (Ser-320). The segment at 336 to 359 (KENASQPVAPSASQREHSAVNSPA) is disordered. Residues 337 to 348 (ENASQPVAPSAS) show a composition bias toward polar residues. Residues 386 to 434 (LLHWLYKDPQNNVQGPFTGVDMHQWYRAGYFPLGLPIKRLEEEEYYSLA) enclose the GYF domain. Disordered regions lie at residues 467 to 486 (DLPLSNYLPESSEQNRGGNK), 496 to 563 (EVSN…NESL), 576 to 637 (SEET…HLPS), 651 to 682 (SEALPQVEKSNSDQPPVAIPSTSKTGSPWAKV), 697 to 729 (EKQNENLKSKVASNPVSQTSTNAKASTPALASG), 760 to 794 (AELAQNKQQSSVTTASPRSNALNANTPKAAAPSSN), 818 to 859 (VGPG…SSKL), and 940 to 992 (TGKD…KKRV). 2 stretches are compositionally biased toward polar residues: residues 474–483 (LPESSEQNRG) and 507–532 (ANSLSEISYNQQSECRSSELNVNEDS). At Ser-509 the chain carries Phosphoserine. Basic and acidic residues-rich tracts occupy residues 549-561 (MYEKENTPIHHNE) and 577-595 (EETKQEKPSKLKETVESKR). Positions 596 to 606 (LSTGVQKQSPA) are enriched in polar residues. Residues Ser-604 and Ser-637 each carry the phosphoserine modification. 2 stretches are compositionally biased toward polar residues: residues 658–676 (EKSNSDQPPVAIPSTSKTG) and 707–721 (VASNPVSQTSTNAKA). Ser-775, Ser-829, Ser-838, and Ser-840 each carry phosphoserine. Polar residues-rich tracts occupy residues 825–859 (VNQQSPSAQQTTRSPSKVSATLNAGNSQASTSSKL) and 943–966 (DGQQSNNKSQSELGNSSGAWSQVV).

It belongs to the SMY2/mpd2 family.

The protein localises to the cytoplasm. In terms of biological role, has a role in mRNA export from the nucleus. This Schizosaccharomyces pombe (strain 972 / ATCC 24843) (Fission yeast) protein is GYF domain-containing protein mpd2 (mpd2).